We begin with the raw amino-acid sequence, 180 residues long: Succinate dehydrogenase cytochrome B subunit, mitochondrial (180 aa).

At 1–82 the chain is on the mitochondrial matrix side; that stretch reads MFATRSFCLS…WYLSSLHRIT (82 aa). A helical transmembrane segment spans residues 83–103; that stretch reads GCVVAGTLYAFAMGYLVAPLA. Topologically, residues 104–122 are mitochondrial intermembrane; it reads GYSLDTATISGLIQQVPTW. The helical transmembrane segment at 123–143 threads the bilayer; it reads IKVPAKFVISYPLTFHIFNGI. H138 is a binding site for heme. Topologically, residues 144–159 are mitochondrial matrix; that stretch reads RHLIWDTTKELSLKGV. The chain crosses the membrane as a helical span at residues 160 to 180; sequence YRTGYAVLALSVLTSGYFAMI.

It belongs to the cytochrome b560 family. Forms part of complex II containing four subunits: a 70 kDa flavoprotein (FP), a 27 kDa iron-sulfur protein (IP), a cytochrome B and a membrane-anchoring protein. Heme serves as cofactor.

The protein resides in the mitochondrion inner membrane. It participates in carbohydrate metabolism; tricarboxylic acid cycle. Functionally, membrane-anchoring subunit of succinate dehydrogenase (SDH) that is involved in complex II of the mitochondrial electron transport chain and is responsible for transferring electrons from succinate to ubiquinone (coenzyme Q). In Schizosaccharomyces pombe (strain 972 / ATCC 24843) (Fission yeast), this protein is Succinate dehydrogenase cytochrome B subunit, mitochondrial (sdh3).